We begin with the raw amino-acid sequence, 545 residues long: Glucose-6-phosphate isomerase (545 aa).

The Proton donor role is filled by glutamate 351. Catalysis depends on residues histidine 382 and lysine 510.

This sequence belongs to the GPI family.

It localises to the cytoplasm. The catalysed reaction is alpha-D-glucose 6-phosphate = beta-D-fructose 6-phosphate. It functions in the pathway carbohydrate biosynthesis; gluconeogenesis. The protein operates within carbohydrate degradation; glycolysis; D-glyceraldehyde 3-phosphate and glycerone phosphate from D-glucose: step 2/4. Catalyzes the reversible isomerization of glucose-6-phosphate to fructose-6-phosphate. This Helicobacter pylori (strain J99 / ATCC 700824) (Campylobacter pylori J99) protein is Glucose-6-phosphate isomerase.